A 476-amino-acid chain; its full sequence is MAAPRLPPARALSGVMVPAPIQDLEALRALTALFKEQRNRETAPRTIFQRVLDILKKSSHAVELACRDPSQVENLASSLQLITECFRCLRNACIECSVNQNSIRNLDAIGVAVDLILLFRELRVEQESLLTAFRCGLQFLGNIASRNEDSQSIVWVHAFPELFLSCLNHPDKKIVAYSSMILFTSLNHERMKELEENLNIAIDVIDAYQKHPESEWPFLIITDLFLKSPELVQAMFPKLNNQERVTLLDLMIAKITSDEPLTKDDIPVFLRHAELIASTFVDQCKTVLKLASEEPPDDEEALATIRLLDVLCEMTVNTELLGYLQVFPGLLERVIDLLRVIHVAGKETTNIFSNCGCVRAEGDISNVAEGFKSHLIRLIGNLCYKNKDNQDKVNELDGIPLILDNCNISDSNPFLTQWVIYAIRNLTEDNSQNQDLIAKMEEQGLADASLLKKVGFEVEKKGEKLILKSTRDTPKP.

At arginine 10 the chain carries Omega-N-methylarginine. Residues serine 13 and serine 78 each carry the phosphoserine modification. Position 83 is a phosphothreonine (threonine 83). At serine 431 the chain carries Phosphoserine.

Belongs to the ataxin-10 family. In terms of assembly, homooligomer. Interacts with GNB2. Interacts with IQCB1. Interacts with OGT. In terms of processing, polyubiquitinated. Post-translationally, phosphorylation at Ser-13 by AURKB promotes the association of ATXN10 with PLK1. Phosphorylation at Ser-78 and Thr-83 by PLK1 may play a role in the regulation of cytokinesis and may stimulate the proteasome-mediated degradation of ATXN10.

Its subcellular location is the cytoplasm. The protein localises to the perinuclear region. The protein resides in the midbody. It is found in the cytoskeleton. It localises to the cilium basal body. Its subcellular location is the microtubule organizing center. The protein localises to the centrosome. The protein resides in the centriole. Functionally, may play a role in the regulation of cytokinesis. May play a role in signaling by stimulating protein glycosylation. Induces neuritogenesis by activating the Ras-MAP kinase pathway and is necessary for the survival of cerebellar neurons. Does not appear to play a major role in ciliogenesis. This Pongo abelii (Sumatran orangutan) protein is Ataxin-10 (ATXN10).